The chain runs to 257 residues: MEVFAVEGVPEVRPGDDVAELLVEQADLQDDDVVCVASTIVSKANGRGRSLSSYEPSGRAERIAATIEDIADEEKDPRMAQAILDECEEVLVEAPFILGVTKFGHITVNAGIDRSNVPGADLLLLPEDPTAEAEAIRDGIREHAGVEPSVIVTDTSGRPFRLGQRGVALGWAGLSASRDWRGEHDRDGRELEATVQAVVDELAAAANLVTGEGDGGTPAAVVRDFDFGDHAGSEQLFRDPEKDVVRQALREWSHVRD.

GTP contacts are provided by residues 9 to 12 (VPEV), 38 to 39 (ST), and Lys-43. Asp-113 provides a ligand contact to a divalent metal cation. Asn-116 contributes to the GTP binding site. A divalent metal cation-binding residues include Asp-154, Thr-155, and Glu-212. 210-217 (TGEGDGGT) lines the GTP pocket.

It belongs to the CofE family. In terms of assembly, homodimer. Mg(2+) serves as cofactor. Requires Mn(2+) as cofactor. The cofactor is K(+).

It carries out the reaction oxidized coenzyme F420-0 + GTP + L-glutamate = oxidized coenzyme F420-1 + GDP + phosphate + H(+). The enzyme catalyses oxidized coenzyme F420-1 + GTP + L-glutamate = oxidized coenzyme F420-2 + GDP + phosphate + H(+). It functions in the pathway cofactor biosynthesis; coenzyme F420 biosynthesis. Its function is as follows. Catalyzes the GTP-dependent successive addition of two or more gamma-linked L-glutamates to the L-lactyl phosphodiester of 7,8-didemethyl-8-hydroxy-5-deazariboflavin (F420-0) to form coenzyme F420-0-glutamyl-glutamate (F420-2) or polyglutamated F420 derivatives. The sequence is that of Coenzyme F420:L-glutamate ligase from Haloarcula marismortui (strain ATCC 43049 / DSM 3752 / JCM 8966 / VKM B-1809) (Halobacterium marismortui).